The chain runs to 142 residues: FAD synthase (142 aa).

ATP-binding positions include 9–10, 14–17, and aspartate 92; these read TF and HPGH.

It belongs to the archaeal FAD synthase family. As to quaternary structure, homodimer. It depends on a divalent metal cation as a cofactor.

It catalyses the reaction FMN + ATP + H(+) = FAD + diphosphate. Its pathway is cofactor biosynthesis; FAD biosynthesis; FAD from FMN: step 1/1. Its function is as follows. Catalyzes the transfer of the AMP portion of ATP to flavin mononucleotide (FMN) to produce flavin adenine dinucleotide (FAD) coenzyme. The protein is FAD synthase of Haloferax volcanii (strain ATCC 29605 / DSM 3757 / JCM 8879 / NBRC 14742 / NCIMB 2012 / VKM B-1768 / DS2) (Halobacterium volcanii).